Reading from the N-terminus, the 316-residue chain is Coiled-coil domain-containing protein 42 (316 aa).

Coiled-coil stretches lie at residues Ser-39–Leu-146 and Leu-178–Arg-232.

Belongs to the CFAP73 family. In terms of assembly, interacts with ODF1 and ODF2. Interacts with CCDC38. Interacts with CCDC146. Interacts with CFAP53.

The protein localises to the cytoplasm. The protein resides in the perinuclear region. It is found in the cytoskeleton. It localises to the cell projection. Its subcellular location is the cilium. The protein localises to the flagellum. The protein resides in the microtubule organizing center. It is found in the centrosome. Its function is as follows. Essential for male fertility. Required for sperm development. This chain is Coiled-coil domain-containing protein 42, found in Homo sapiens (Human).